Here is a 341-residue protein sequence, read N- to C-terminus: N-acetyl-gamma-glutamyl-phosphate reductase (341 aa).

Cys147 is a catalytic residue.

Belongs to the NAGSA dehydrogenase family. Type 1 subfamily.

Its subcellular location is the cytoplasm. It catalyses the reaction N-acetyl-L-glutamate 5-semialdehyde + phosphate + NADP(+) = N-acetyl-L-glutamyl 5-phosphate + NADPH + H(+). Its pathway is amino-acid biosynthesis; L-arginine biosynthesis; N(2)-acetyl-L-ornithine from L-glutamate: step 3/4. Functionally, catalyzes the NADPH-dependent reduction of N-acetyl-5-glutamyl phosphate to yield N-acetyl-L-glutamate 5-semialdehyde. This Staphylococcus epidermidis (strain ATCC 35984 / DSM 28319 / BCRC 17069 / CCUG 31568 / BM 3577 / RP62A) protein is N-acetyl-gamma-glutamyl-phosphate reductase.